A 246-amino-acid polypeptide reads, in one-letter code: 1-(5-phosphoribosyl)-5-[(5-phosphoribosylamino)methylideneamino] imidazole-4-carboxamide isomerase (246 aa).

Aspartate 7 (proton acceptor) is an active-site residue. The Proton donor role is filled by aspartate 130.

Belongs to the HisA/HisF family.

It localises to the cytoplasm. It carries out the reaction 1-(5-phospho-beta-D-ribosyl)-5-[(5-phospho-beta-D-ribosylamino)methylideneamino]imidazole-4-carboxamide = 5-[(5-phospho-1-deoxy-D-ribulos-1-ylimino)methylamino]-1-(5-phospho-beta-D-ribosyl)imidazole-4-carboxamide. It functions in the pathway amino-acid biosynthesis; L-histidine biosynthesis; L-histidine from 5-phospho-alpha-D-ribose 1-diphosphate: step 4/9. The polypeptide is 1-(5-phosphoribosyl)-5-[(5-phosphoribosylamino)methylideneamino] imidazole-4-carboxamide isomerase (Blochmanniella pennsylvanica (strain BPEN)).